A 366-amino-acid chain; its full sequence is Anhydro-N-acetylmuramic acid kinase (366 aa).

ATP is bound at residue 10–17 (GTSMDGID).

It belongs to the anhydro-N-acetylmuramic acid kinase family.

It catalyses the reaction 1,6-anhydro-N-acetyl-beta-muramate + ATP + H2O = N-acetyl-D-muramate 6-phosphate + ADP + H(+). Its pathway is amino-sugar metabolism; 1,6-anhydro-N-acetylmuramate degradation. It functions in the pathway cell wall biogenesis; peptidoglycan recycling. In terms of biological role, catalyzes the specific phosphorylation of 1,6-anhydro-N-acetylmuramic acid (anhMurNAc) with the simultaneous cleavage of the 1,6-anhydro ring, generating MurNAc-6-P. Is required for the utilization of anhMurNAc either imported from the medium or derived from its own cell wall murein, and thus plays a role in cell wall recycling. The protein is Anhydro-N-acetylmuramic acid kinase of Legionella pneumophila (strain Corby).